A 393-amino-acid chain; its full sequence is NAD(P)H-quinone oxidoreductase subunit H, chloroplastic (393 aa).

The protein belongs to the complex I 49 kDa subunit family. As to quaternary structure, NDH is composed of at least 16 different subunits, 5 of which are encoded in the nucleus.

The protein resides in the plastid. It localises to the chloroplast thylakoid membrane. The catalysed reaction is a plastoquinone + NADH + (n+1) H(+)(in) = a plastoquinol + NAD(+) + n H(+)(out). The enzyme catalyses a plastoquinone + NADPH + (n+1) H(+)(in) = a plastoquinol + NADP(+) + n H(+)(out). In terms of biological role, NDH shuttles electrons from NAD(P)H:plastoquinone, via FMN and iron-sulfur (Fe-S) centers, to quinones in the photosynthetic chain and possibly in a chloroplast respiratory chain. The immediate electron acceptor for the enzyme in this species is believed to be plastoquinone. Couples the redox reaction to proton translocation, and thus conserves the redox energy in a proton gradient. The polypeptide is NAD(P)H-quinone oxidoreductase subunit H, chloroplastic (Lotus japonicus (Lotus corniculatus var. japonicus)).